Here is a 358-residue protein sequence, read N- to C-terminus: DNA polymerase IV (358 aa).

In terms of domain architecture, UmuC spans 4-185 (IIHIDMDCYF…LSLRKIPGVG (182 aa)). Mg(2+) is bound by residues Asp-8 and Asp-103. Glu-104 is an active-site residue.

It belongs to the DNA polymerase type-Y family. Monomer. It depends on Mg(2+) as a cofactor.

It is found in the cytoplasm. The catalysed reaction is DNA(n) + a 2'-deoxyribonucleoside 5'-triphosphate = DNA(n+1) + diphosphate. Poorly processive, error-prone DNA polymerase involved in untargeted mutagenesis. Copies undamaged DNA at stalled replication forks, which arise in vivo from mismatched or misaligned primer ends. These misaligned primers can be extended by PolIV. Exhibits no 3'-5' exonuclease (proofreading) activity. May be involved in translesional synthesis, in conjunction with the beta clamp from PolIII. This chain is DNA polymerase IV, found in Shewanella sp. (strain W3-18-1).